Here is a 300-residue protein sequence, read N- to C-terminus: Glycine--tRNA ligase alpha subunit (300 aa).

Belongs to the class-II aminoacyl-tRNA synthetase family. In terms of assembly, tetramer of two alpha and two beta subunits.

The protein resides in the cytoplasm. It catalyses the reaction tRNA(Gly) + glycine + ATP = glycyl-tRNA(Gly) + AMP + diphosphate. This is Glycine--tRNA ligase alpha subunit from Pseudoalteromonas translucida (strain TAC 125).